A 679-amino-acid chain; its full sequence is Methionine--tRNA ligase (679 aa).

The short motif at 14–24 (PYANGSIHLGH) is the 'HIGH' region element. C145, C148, C158, and C161 together coordinate Zn(2+). The 'KMSKS' region signature appears at 331–335 (KMSKS). Residue K334 coordinates ATP. A tRNA-binding domain is found at 577 to 679 (AFAAVDLRIA…SGAKPGQRVK (103 aa)).

This sequence belongs to the class-I aminoacyl-tRNA synthetase family. MetG type 1 subfamily. In terms of assembly, homodimer. Zn(2+) is required as a cofactor.

Its subcellular location is the cytoplasm. It catalyses the reaction tRNA(Met) + L-methionine + ATP = L-methionyl-tRNA(Met) + AMP + diphosphate. Functionally, is required not only for elongation of protein synthesis but also for the initiation of all mRNA translation through initiator tRNA(fMet) aminoacylation. This is Methionine--tRNA ligase from Pseudomonas paraeruginosa (strain DSM 24068 / PA7) (Pseudomonas aeruginosa (strain PA7)).